Reading from the N-terminus, the 485-residue chain is Cysteine--tRNA ligase (485 aa).

C27 is a Zn(2+) binding site. The 'HIGH' region signature appears at 29–39 (ITAYDLCHIGH). Zn(2+) contacts are provided by C208, H233, and E237. The short motif at 265–269 (KMSKS) is the 'KMSKS' region element. K268 is a binding site for ATP.

The protein belongs to the class-I aminoacyl-tRNA synthetase family. In terms of assembly, monomer. It depends on Zn(2+) as a cofactor.

It is found in the cytoplasm. It catalyses the reaction tRNA(Cys) + L-cysteine + ATP = L-cysteinyl-tRNA(Cys) + AMP + diphosphate. In Maridesulfovibrio salexigens (strain ATCC 14822 / DSM 2638 / NCIMB 8403 / VKM B-1763) (Desulfovibrio salexigens), this protein is Cysteine--tRNA ligase.